The primary structure comprises 89 residues: Small ribosomal subunit protein uS15 (89 aa).

Belongs to the universal ribosomal protein uS15 family. Part of the 30S ribosomal subunit. Forms a bridge to the 50S subunit in the 70S ribosome, contacting the 23S rRNA.

In terms of biological role, one of the primary rRNA binding proteins, it binds directly to 16S rRNA where it helps nucleate assembly of the platform of the 30S subunit by binding and bridging several RNA helices of the 16S rRNA. Its function is as follows. Forms an intersubunit bridge (bridge B4) with the 23S rRNA of the 50S subunit in the ribosome. The sequence is that of Small ribosomal subunit protein uS15 from Gluconacetobacter diazotrophicus (strain ATCC 49037 / DSM 5601 / CCUG 37298 / CIP 103539 / LMG 7603 / PAl5).